A 171-amino-acid polypeptide reads, in one-letter code: uncharacterized protein (171 aa).

Residues 56-83 are disordered; the sequence is TVGVNKNAKNGPTQSQTRSGSAGAQARM. Polar residues predominate over residues 57-77; the sequence is VGVNKNAKNGPTQSQTRSGSA. Residues 113 to 170 enclose the J domain; sequence KAFETLGLGASATTADIKAAYKDLVKKHHPDANGGDRGSEERFRAVIQAYQLLKQAGF.

This is an uncharacterized protein from Sinorhizobium sp.